Reading from the N-terminus, the 149-residue chain is D-aminoacyl-tRNA deacylase (149 aa).

The Gly-cisPro motif, important for rejection of L-amino acids signature appears at 137–138 (GP).

It belongs to the DTD family. In terms of assembly, homodimer.

It is found in the cytoplasm. It catalyses the reaction glycyl-tRNA(Ala) + H2O = tRNA(Ala) + glycine + H(+). The enzyme catalyses a D-aminoacyl-tRNA + H2O = a tRNA + a D-alpha-amino acid + H(+). Its function is as follows. An aminoacyl-tRNA editing enzyme that deacylates mischarged D-aminoacyl-tRNAs. Also deacylates mischarged glycyl-tRNA(Ala), protecting cells against glycine mischarging by AlaRS. Acts via tRNA-based rather than protein-based catalysis; rejects L-amino acids rather than detecting D-amino acids in the active site. By recycling D-aminoacyl-tRNA to D-amino acids and free tRNA molecules, this enzyme counteracts the toxicity associated with the formation of D-aminoacyl-tRNA entities in vivo and helps enforce protein L-homochirality. This Syntrophobacter fumaroxidans (strain DSM 10017 / MPOB) protein is D-aminoacyl-tRNA deacylase.